The chain runs to 1334 residues: Aldehyde oxidase 1 (1334 aa).

Residues 5–92 (PELLFYVNGR…GAAVTTVEGI (88 aa)) enclose the 2Fe-2S ferredoxin-type domain. Residues C44, C49, C52, and C74 each contribute to the [2Fe-2S] cluster site. Q113 is a Mo-molybdopterin binding site. Residues C114, C117, C149, and C151 each coordinate [2Fe-2S] cluster. C151 is a binding site for Mo-molybdopterin. Residues 236–421 (FSGERMMWIS…ASVHIPYSRK (186 aa)) form the FAD-binding PCMH-type domain. Residues 264–271 (VVMGNTSV), A345, S354, H358, D367, and L411 contribute to the FAD site. Residues 802–803 (AF) and M1043 contribute to the Mo-molybdopterin site. A Phosphoserine modification is found at S1064. Mo-molybdopterin is bound by residues 1084–1087 (GSVV), Q1199, and L1264. E1266 (proton acceptor; for azaheterocycle hydroxylase activity) is an active-site residue.

This sequence belongs to the xanthine dehydrogenase family. As to quaternary structure, homodimer. It depends on [2Fe-2S] cluster as a cofactor. The cofactor is FAD. Mo-molybdopterin serves as cofactor. In terms of processing, the N-terminus is blocked. As to expression, very high expression in liver and lung. High expression in kidney, pancreas, brain stem and spinal cord. Moderate expression in heart, testis, eye, cerebral cortex and cerebellum. Low expression in stomach and muscle.

The protein resides in the cytoplasm. The enzyme catalyses an aldehyde + O2 + H2O = a carboxylate + H2O2 + H(+). It catalyses the reaction retinal + O2 + H2O = retinoate + H2O2 + H(+). The catalysed reaction is all-trans-retinal + O2 + H2O = all-trans-retinoate + H2O2 + H(+). Inhibited by hydralazine and menadione. Not inhibited by BOF-4272 or allopurinol, xanthine dehydrogenase potent inhibitors. In contrast to guinea pig, human and rat, isovanillin is not an inhibitor but a substrate for AOX1 in rabbit. Functionally, oxidase with broad substrate specificity, oxidizing aromatic azaheterocycles, such as N1-methylnicotinamide, N-methylphthalazinium and phthalazine, as well as aldehydes, such as benzaldehyde, retinal, pyridoxal, and vanillin. Plays a key role in the metabolism of xenobiotics and drugs containing aromatic azaheterocyclic substituents. Participates in the bioactivation of prodrugs such as famciclovir, catalyzing the oxidation step from 6-deoxypenciclovir to penciclovir, which is a potent antiviral agent. Is probably involved in the regulation of reactive oxygen species homeostasis. May be a prominent source of superoxide generation via the one-electron reduction of molecular oxygen. May also catalyze nitric oxide (NO) production via the reduction of nitrite to NO with NADH or aldehyde as electron donor. May play a role in adipogenesis. Cannot use hypoxanthine and all-trans-retinol as substrate. The protein is Aldehyde oxidase 1 of Oryctolagus cuniculus (Rabbit).